The following is a 426-amino-acid chain: Glutamate-1-semialdehyde 2,1-aminomutase (426 aa).

Lysine 268 carries the post-translational modification N6-(pyridoxal phosphate)lysine.

This sequence belongs to the class-III pyridoxal-phosphate-dependent aminotransferase family. HemL subfamily. Requires pyridoxal 5'-phosphate as cofactor.

It is found in the cytoplasm. The enzyme catalyses (S)-4-amino-5-oxopentanoate = 5-aminolevulinate. It participates in porphyrin-containing compound metabolism; protoporphyrin-IX biosynthesis; 5-aminolevulinate from L-glutamyl-tRNA(Glu): step 2/2. The polypeptide is Glutamate-1-semialdehyde 2,1-aminomutase (Saccharolobus islandicus (strain Y.N.15.51 / Yellowstone #2) (Sulfolobus islandicus)).